A 59-amino-acid polypeptide reads, in one-letter code: Putative antitoxin AF_1090 (59 aa).

Belongs to the UPF0165 family.

Possibly the antitoxin component of a type II toxin-antitoxin (TA) system. In Archaeoglobus fulgidus (strain ATCC 49558 / DSM 4304 / JCM 9628 / NBRC 100126 / VC-16), this protein is Putative antitoxin AF_1090.